The sequence spans 455 residues: Secreted triacylglycerol lipase LIP4 (455 aa).

The N-terminal stretch at 1 to 19 (MKLNLFILGLLTLAAHAYA) is a signal peptide. The N-linked (GlcNAc...) asparagine glycan is linked to N98. An intrachain disulfide couples C115 to C284. S197 serves as the catalytic Nucleophile. An N-linked (GlcNAc...) asparagine glycan is attached at N230. Residues D344 and H378 contribute to the active site. C360 and C406 are oxidised to a cystine.

The protein belongs to the AB hydrolase superfamily. Lipase family. Class Lip subfamily.

The protein resides in the secreted. It is found in the cell wall. It carries out the reaction a triacylglycerol + H2O = a diacylglycerol + a fatty acid + H(+). The catalysed reaction is a monoacylglycerol + H2O = glycerol + a fatty acid + H(+). It catalyses the reaction a diacylglycerol + H2O = a monoacylglycerol + a fatty acid + H(+). Secreted lipase involved in Dandruff and seborrheic dermatitis (D/SD) probably via lipase-mediated breakdown of sebaceous lipids and release of irritating free fatty acids. Has triacylglycerol lipase activity and is able to hydrolyze triolein. Mostly converts monoolein to di- and triolein, while free fatty acids are only produced in low amounts. The protein is Secreted triacylglycerol lipase LIP4 of Malassezia globosa (strain ATCC MYA-4612 / CBS 7966) (Dandruff-associated fungus).